Reading from the N-terminus, the 29-residue chain is Omega-conotoxin MVIIC (29 aa).

The propeptide occupies 1–2; it reads TR. 3 disulfides stabilise this stretch: C3–C18, C10–C22, and C17–C28. Position 28 is a cysteine amide (C28).

This sequence belongs to the conotoxin O1 superfamily. Post-translationally, not hydroxylated; hydroxylation, on a synthetic hydroxylated MVIIC, has a significant impact on the oxidative folding but not on the biological activity. In terms of tissue distribution, expressed by the venom duct.

It is found in the secreted. Omega-conotoxins act at presynaptic membranes, they bind and block voltage-gated calcium channels (Cav). This toxin preferentially blocks P/Q-type calcium channels (Cav2.1/CACNA1A) (IC(50)=0.60 nM). Also shows an inhibition on Cav2.2/CACNA1A channels (IC(50)=7.0 nM). The chain is Omega-conotoxin MVIIC from Conus magus (Magical cone).